Here is a 112-residue protein sequence, read N- to C-terminus: 87 kDa annexin-binding protein (112 aa).

Binds annexin.

The polypeptide is 87 kDa annexin-binding protein (Physarum polycephalum (Slime mold)).